Consider the following 521-residue polypeptide: RING-type E3 ubiquitin-protein ligase PPIL2 (521 aa).

The region spanning 35–108 is the U-box domain; the sequence is RRLPFDHCSL…GQYHCPVLYS (74 aa). Residues 197–217 adopt a coiled-coil conformation; the sequence is LKNTNSETRETLQELYKEFKG. K216 participates in a covalent cross-link: Glycyl lysine isopeptide (Lys-Gly) (interchain with G-Cter in SUMO2). The 156-residue stretch at 278–433 folds into the PPIase cyclophilin-type domain; the sequence is KKGYVRLHTN…EEVLICTTTV (156 aa). The span at 447–462 shows a compositional bias: basic and acidic residues; that stretch reads QERKKTQHQVDPEAKV. The disordered stretch occupies residues 447 to 521; that stretch reads QERKKTQHQV…SRGFGDFSSW (75 aa). A compositionally biased stretch (polar residues) spans 465–478; that stretch reads SQPQPGNQGPQTYR. K483 carries the post-translational modification N6-acetyllysine.

It belongs to the cyclophilin-type PPIase family. PPIL2 subfamily. As to quaternary structure, component of the minor spliceosome, which splices U12-type introns. Within this complex, interacts with PRPF8/PRP8, EFTUD2/SNU114 and PLRG1. Interacts with isoform 2 of BSG. Interacts (via the PPIase cyclophilin-type domain) with CRNKL1; they may form a trimeric complex with HSP90.

It is found in the nucleus. It carries out the reaction S-ubiquitinyl-[E2 ubiquitin-conjugating enzyme]-L-cysteine + [acceptor protein]-L-lysine = [E2 ubiquitin-conjugating enzyme]-L-cysteine + N(6)-ubiquitinyl-[acceptor protein]-L-lysine.. Its pathway is protein modification; protein ubiquitination. In terms of biological role, has a ubiquitin-protein ligase activity acting as an E3 ubiquitin protein ligase or as an ubiquitin-ubiquitin ligase promoting elongation of ubiquitin chains on substrates. By mediating 'Lys-48'-linked polyubiquitination of proteins could target them for proteasomal degradation. May also function as a chaperone, playing a role in transport to the cell membrane of BSG/Basigin for instance. Probable inactive PPIase with no peptidyl-prolyl cis-trans isomerase activity. As a component of the minor spliceosome, involved in the splicing of U12-type introns in pre-mRNAs. The polypeptide is RING-type E3 ubiquitin-protein ligase PPIL2 (Mus musculus (Mouse)).